The primary structure comprises 393 residues: E3 ubiquitin-protein transferase RMND5B (393 aa).

At methionine 1 the chain carries N-acetylmethionine. The region spanning 116–148 (QQQILQMAIVEHLYQQGMLSVAEELCQESTLNV) is the LisH domain. The 58-residue stretch at 155-212 (PFLELNRILEALHEQDLGPALEWAVSHRQRLLELNSSLEFKLHRLHFIRLLAGGPEKQ) folds into the CTLH domain. Residues 338–379 (CPILRQQTSDSNPPIKLICGHVISRDALNKLINGGKLKCPYC) form an RING-Gid-type zinc finger.

In terms of assembly, identified in the CTLH complex that contains GID4, RANBP9 and/or RANBP10, MKLN1, MAEA, RMND5A (or alternatively its paralog RMND5B), GID8, ARMC8, WDR26 and YPEL5. Within this complex, MAEA, RMND5A (or alternatively its paralog RMND5B), GID8, WDR26, and RANBP9 and/or RANBP10 form the catalytic core, while GID4, MKLN1, ARMC8 and YPEL5 have ancillary roles.

It localises to the cytoplasm. It is found in the cytosol. It carries out the reaction S-ubiquitinyl-[E2 ubiquitin-conjugating enzyme]-L-cysteine + [acceptor protein]-L-lysine = [E2 ubiquitin-conjugating enzyme]-L-cysteine + N(6)-ubiquitinyl-[acceptor protein]-L-lysine.. Functionally, core component of the CTLH E3 ubiquitin-protein ligase complex that selectively accepts ubiquitin from UBE2H and mediates ubiquitination and subsequent proteasomal degradation of the transcription factor HBP1. MAEA and RMND5A are both required for catalytic activity of the CTLH E3 ubiquitin-protein ligase complex. Catalytic activity of the complex is required for normal cell proliferation. The CTLH E3 ubiquitin-protein ligase complex is not required for the degradation of enzymes involved in gluconeogenesis, such as FBP1. This is E3 ubiquitin-protein transferase RMND5B (Rmnd5b) from Mus musculus (Mouse).